A 193-amino-acid polypeptide reads, in one-letter code: MSTMLIAVILLTLLALFFGVLLGFAALKFKVEGNPIVDELEAILPQTQCGQCGYPGCRPYAEAIANGDKVNKCPPGGTATMEKLANLMGVEPEPLNAEAQSQVKKVAYIREDECIGCTKCIQACPVDAIIGAGKLMHTVLTADCTGCDLCVEPCPVDCIDMIPVGQNLKNWNWRLNAIPVTLIQETPHEEKRG.

A hydrophobic region spans residues 1–26 (MSTMLIAVILLTLLALFFGVLLGFAA). The 4Fe-4S domain maps to 32–90 (EGNPIVDELEAILPQTQCGQCGYPGCRPYAEAIANGDKVNKCPPGGTATMEKLANLMGV). Residues Cys49, Cys52, Cys57, Cys73, Cys114, Cys117, Cys120, Cys124, Cys144, Cys147, Cys150, and Cys154 each contribute to the [4Fe-4S] cluster site. 2 consecutive 4Fe-4S ferredoxin-type domains span residues 105–134 (KVAYIREDECIGCTKCIQACPVDAIIGAGK) and 136–164 (MHTVLTADCTGCDLCVEPCPVDCIDMIPV).

This sequence belongs to the 4Fe4S bacterial-type ferredoxin family. RnfB subfamily. The complex is composed of six subunits: RnfA, RnfB, RnfC, RnfD, RnfE and RnfG. [4Fe-4S] cluster is required as a cofactor.

The protein localises to the cell inner membrane. Its function is as follows. Part of a membrane-bound complex that couples electron transfer with translocation of ions across the membrane. This chain is Ion-translocating oxidoreductase complex subunit B, found in Shewanella sp. (strain ANA-3).